The following is an 84-amino-acid chain: CDC42 small effector protein 2 (84 aa).

S-palmitoyl cysteine attachment occurs at residues cysteine 10 and cysteine 11. The 14-residue stretch at isoleucine 29 to glycine 42 folds into the CRIB domain. Phosphoserine is present on residues serine 43 and serine 52.

This sequence belongs to the CDC42SE/SPEC family. Interacts with CDC42 (in GTP-bound form). Interacts weakly with RAC1 and not at all with RHOA.

It is found in the cytoplasm. It localises to the cytoskeleton. The protein localises to the cell membrane. The protein resides in the cell projection. Its subcellular location is the phagocytic cup. Functionally, probably involved in the organization of the actin cytoskeleton by acting downstream of CDC42, inducing actin filament assembly. Alters CDC42-induced cell shape changes. In activated T-cells, may play a role in CDC42-mediated F-actin accumulation at the immunological synapse. May play a role in early contractile events in phagocytosis in macrophages. The sequence is that of CDC42 small effector protein 2 (CDC42SE2) from Pongo abelii (Sumatran orangutan).